The primary structure comprises 928 residues: Heme/hemopexin-binding protein (928 aa).

A signal peptide spans 1–21 (MYKLNVISLIILTTCSGAAYA). Repeat copies occupy residues 101 to 106 (NGKVYL), 149 to 154 (KDRQVL), 155 to 160 (KEGLVL), 161 to 166 (KDGQVV), 167 to 172 (KEGQVI), 205 to 210 (NGKVYL), 279 to 284 (NGKVVL), 410 to 415 (NGKVNL), 635 to 640 (NGFVHL), and 674 to 679 (NGKVSM). Residues 101–679 (NGKVYLANPN…RLGMNGKVSM (579 aa)) are 6 X 6 AA approximate repeats. A 4 X 6 AA approximate tandem repeats region spans residues 149–172 (KDRQVLKEGLVLKDGQVVKEGQVI).

It is found in the secreted. Its function is as follows. Binds heme/hemopexin complexes. In Haemophilus influenzae, this protein is Heme/hemopexin-binding protein (hxuA).